The primary structure comprises 303 residues: Oxygen-dependent coproporphyrinogen-III oxidase (303 aa).

S93 provides a ligand contact to substrate. A divalent metal cation-binding residues include H97 and H107. The active-site Proton donor is the H107. 109-111 is a binding site for substrate; it reads NVR. Residues H146 and H176 each contribute to the a divalent metal cation site. Residues 241–276 form an important for dimerization region; that stretch reads YVEFNLVYDRGTLFGLQSGGRTESILMSLPPQVRWG. 259 to 261 is a binding site for substrate; it reads GGR.

Belongs to the aerobic coproporphyrinogen-III oxidase family. In terms of assembly, homodimer. A divalent metal cation serves as cofactor.

It localises to the cytoplasm. The catalysed reaction is coproporphyrinogen III + O2 + 2 H(+) = protoporphyrinogen IX + 2 CO2 + 2 H2O. Its pathway is porphyrin-containing compound metabolism; protoporphyrin-IX biosynthesis; protoporphyrinogen-IX from coproporphyrinogen-III (O2 route): step 1/1. Functionally, involved in the heme biosynthesis. Catalyzes the aerobic oxidative decarboxylation of propionate groups of rings A and B of coproporphyrinogen-III to yield the vinyl groups in protoporphyrinogen-IX. The polypeptide is Oxygen-dependent coproporphyrinogen-III oxidase (Pseudomonas putida (strain W619)).